Here is a 310-residue protein sequence, read N- to C-terminus: Oxygen-dependent coproporphyrinogen-III oxidase (310 aa).

Ser97 is a binding site for substrate. Positions 101 and 111 each coordinate a divalent metal cation. The active-site Proton donor is the His111. 113–115 (NFR) provides a ligand contact to substrate. A divalent metal cation-binding residues include His150 and His180. The segment at 245 to 280 (YVEFNLLYDRGTRFGLEFGGRTESILMSLPPRVVWR) is important for dimerization. 263–265 (GGR) contributes to the substrate binding site.

Belongs to the aerobic coproporphyrinogen-III oxidase family. As to quaternary structure, homodimer. It depends on a divalent metal cation as a cofactor.

It localises to the cytoplasm. It catalyses the reaction coproporphyrinogen III + O2 + 2 H(+) = protoporphyrinogen IX + 2 CO2 + 2 H2O. It functions in the pathway porphyrin-containing compound metabolism; protoporphyrin-IX biosynthesis; protoporphyrinogen-IX from coproporphyrinogen-III (O2 route): step 1/1. Functionally, involved in the heme biosynthesis. Catalyzes the aerobic oxidative decarboxylation of propionate groups of rings A and B of coproporphyrinogen-III to yield the vinyl groups in protoporphyrinogen-IX. This Coxiella burnetii (strain RSA 331 / Henzerling II) protein is Oxygen-dependent coproporphyrinogen-III oxidase.